The following is a 357-amino-acid chain: Queuosine-tRNA galactosyltransferase (357 aa).

The protein belongs to the glycosyltransferase 2 family.

The protein resides in the cytoplasm. The enzyme catalyses queuosine(34) in tRNA(Tyr) + UDP-alpha-D-galactose = O-5''-beta-D-galactosylqueuosine(34) in tRNA(Tyr) + UDP + H(+). Glycosyltransferase that specifically catalyzes galactosylation of cytoplasmic tRNA(Tyr) modified with queuosine at position 34 (queuosine(34)). Galactosylates the cyclopentene hydroxyl group of queuosine(34) in tRNA(Tyr) to form galactosyl-queuosine(34). Mannosylation of queuosine(34) in tRNA(Tyr) is required to slow-down elongation at cognate codons UAC and suppress stop codon readthrough, thereby regulating protein translation. The polypeptide is Queuosine-tRNA galactosyltransferase (Mus musculus (Mouse)).